Consider the following 889-residue polypeptide: Cytoplasmic aconitate hydratase (889 aa).

Residues Gln86 and 205-207 (DSH) contribute to the substrate site. The [4Fe-4S] cluster site is built by Cys437, Cys503, and Cys506. Residues Arg536, Arg541, Arg699, and 779–780 (SR) each bind substrate.

Belongs to the aconitase/IPM isomerase family. In terms of assembly, interacts (when associated with the 4Fe-4S) with FBXL5. Interacts with frataxin(81-210). [4Fe-4S] cluster serves as cofactor.

It is found in the cytoplasm. It localises to the cytosol. It carries out the reaction citrate = D-threo-isocitrate. In terms of biological role, bifunctional iron sensor that switches between 2 activities depending on iron availability. Iron deprivation, promotes its mRNA binding activity through which it regulates the expression of genes involved in iron uptake, sequestration and utilization. Binds to iron-responsive elements (IRES) in the untranslated region of target mRNAs preventing for instance the translation of ferritin and aminolevulinic acid synthase and stabilizing the transferrin receptor mRNA. Conversely, when cellular iron levels are high, binds a 4Fe-4S cluster which precludes RNA binding activity and promotes the aconitase activity, the isomerization of citrate to isocitrate via cis-aconitate. This Rattus norvegicus (Rat) protein is Cytoplasmic aconitate hydratase (Aco1).